Consider the following 313-residue polypeptide: Dimethyladenosine transferase (313 aa).

Positions 37, 39, 64, 85, 113, and 128 each coordinate S-adenosyl-L-methionine.

The protein belongs to the class I-like SAM-binding methyltransferase superfamily. rRNA adenine N(6)-methyltransferase family. As to quaternary structure, part of the small subunit (SSU) processome, composed of more than 70 proteins and the RNA chaperone small nucleolar RNA (snoRNA) U3.

It localises to the nucleus. Its subcellular location is the nucleoplasm. The protein localises to the nucleolus. It catalyses the reaction adenosine(1779)/adenosine(1780) in 18S rRNA + 4 S-adenosyl-L-methionine = N(6)-dimethyladenosine(1779)/N(6)-dimethyladenosine(1780) in 18S rRNA + 4 S-adenosyl-L-homocysteine + 4 H(+). In terms of biological role, specifically dimethylates two adjacent adenosines in the loop of a conserved hairpin near the 3'-end of 18S rRNA in the 40S particle. Involved in the pre-rRNA processing steps leading to small-subunit rRNA production independently of its RNA-modifying catalytic activity. Part of the small subunit (SSU) processome, first precursor of the small eukaryotic ribosomal subunit. During the assembly of the SSU processome in the nucleolus, many ribosome biogenesis factors, an RNA chaperone and ribosomal proteins associate with the nascent pre-rRNA and work in concert to generate RNA folding, modifications, rearrangements and cleavage as well as targeted degradation of pre-ribosomal RNA by the RNA exosome. The chain is Dimethyladenosine transferase (Dimt1) from Mus musculus (Mouse).